The sequence spans 317 residues: Small glutamine-rich tetratricopeptide repeat-containing protein 2 (317 aa).

4 TPR repeats span residues L14 to E48, A83 to S116, V118 to H150, and A151 to N184. Residues L198 to T215 are compositionally biased toward polar residues. 2 disordered regions span residues L198 to G224 and M298 to Q317.

This sequence belongs to the SGT family.

The protein localises to the cytoplasm. The protein resides in the nucleus. Its function is as follows. Co-chaperone that binds to the molecular chaperone Hsp70 and regulates Hsp70 ATPase activity. This is Small glutamine-rich tetratricopeptide repeat-containing protein 2 (sgt2) from Schizosaccharomyces pombe (strain 972 / ATCC 24843) (Fission yeast).